The chain runs to 319 residues: Zinc finger protein-like 1 homolog (319 aa).

A B box-type; degenerate zinc finger spans residues 1-43; sequence MGLCKCPKRKVTNLFCYEHRVNVCEFCLVDNHPNCVVQSYLNW. The RING-type; atypical zinc finger occupies 53–101; sequence CSLCHTTLTQGETIRLNCLHLLHWRCFDDWAASFPPTTAPAGYRCPCCS. Residues 212-232 are disordered; the sequence is ESSSDTRPLLRQDRDADNEEN. A compositionally biased stretch (basic and acidic residues) spans 219–232; that stretch reads PLLRQDRDADNEEN. Residues 264–284 traverse the membrane as a helical segment; the sequence is KMAIFVMFLALLALITIITVL.

It belongs to the ZFPL1 family.

It is found in the membrane. In Caenorhabditis briggsae, this protein is Zinc finger protein-like 1 homolog.